Here is a 294-residue protein sequence, read N- to C-terminus: Cytidine deaminase (294 aa).

CMP/dCMP-type deaminase domains lie at 48–168 and 186–294; these read DEDA…FGPK and LTGD…VLLG. 89 to 91 lines the substrate pocket; sequence NME. H102 serves as a coordination point for Zn(2+). The active-site Proton donor is the E104. 2 residues coordinate Zn(2+): C129 and C132.

The protein belongs to the cytidine and deoxycytidylate deaminase family. As to quaternary structure, homodimer. Zn(2+) is required as a cofactor.

It carries out the reaction cytidine + H2O + H(+) = uridine + NH4(+). It catalyses the reaction 2'-deoxycytidine + H2O + H(+) = 2'-deoxyuridine + NH4(+). This enzyme scavenges exogenous and endogenous cytidine and 2'-deoxycytidine for UMP synthesis. The protein is Cytidine deaminase of Salmonella arizonae (strain ATCC BAA-731 / CDC346-86 / RSK2980).